The following is a 555-amino-acid chain: MTRYIFITGGVVSSLGKGITSASLGAILEAQGLTVTLLKLDPYINVDPGTMSPFQHGEVFVTEDGAETDLDLGHYERFVNATMTRKNNFTTGRVYADVIRKERRGDYLGGTIQVIPHITDEIKAKIREGADGADVALVEVGGTVGDIESLPFLEAIRQMRIELGDQQTLFIHLTLVPYVAVAGEIKTKPTQHSVKELRSIGIQPDILVCRSEQPLPDAERAKIALFTNVPEPSVISLSDVKSIYEIPLILRDQGLGNRVCEKLNIKATAADLDDWKKVVQAQKNPRHTVTVAVVGKYVDLEDSYKSLSEALIHAGIHTQTRVVIEYIDSEAIELHGTELLKKVDAILVPGGFGSRGIEGKILAAQYARENGIPYFGICLGMQIAIIEFARHKAQMENANSTEFDPKTPFPVVALVSEWMAKEGIIEKRKWGDDLGGTMRLGGQPCRLKIDSLARRLYGEDRVIERHRHRYEVNNDLIGELEKKGLVISGRSIDDRLVEMIELADHPWFVGCQFHPEFTSTPRKGHPLFIGFIKAGLAAKEAKKAVLAAPSQEKTD.

Residues 1–265 (MTRYIFITGG…GNRVCEKLNI (265 aa)) are amidoligase domain. CTP is bound at residue serine 13. Serine 13 contacts UTP. ATP contacts are provided by residues 14 to 19 (SLGKGI) and aspartate 71. The Mg(2+) site is built by aspartate 71 and glutamate 139. CTP contacts are provided by residues 146 to 148 (DIE), 186 to 191 (KTKPTQ), and lysine 222. Residues 186–191 (KTKPTQ) and lysine 222 each bind UTP. In terms of domain architecture, Glutamine amidotransferase type-1 spans 290–541 (TVAVVGKYVD…IKAGLAAKEA (252 aa)). L-glutamine is bound at residue glycine 351. Catalysis depends on cysteine 378, which acts as the Nucleophile; for glutamine hydrolysis. L-glutamine is bound by residues 379–382 (LGMQ), glutamate 402, and arginine 469. Residues histidine 514 and glutamate 516 contribute to the active site.

It belongs to the CTP synthase family. In terms of assembly, homotetramer.

It catalyses the reaction UTP + L-glutamine + ATP + H2O = CTP + L-glutamate + ADP + phosphate + 2 H(+). The catalysed reaction is L-glutamine + H2O = L-glutamate + NH4(+). It carries out the reaction UTP + NH4(+) + ATP = CTP + ADP + phosphate + 2 H(+). It participates in pyrimidine metabolism; CTP biosynthesis via de novo pathway; CTP from UDP: step 2/2. Allosterically activated by GTP, when glutamine is the substrate; GTP has no effect on the reaction when ammonia is the substrate. The allosteric effector GTP functions by stabilizing the protein conformation that binds the tetrahedral intermediate(s) formed during glutamine hydrolysis. Inhibited by the product CTP, via allosteric rather than competitive inhibition. Its function is as follows. Catalyzes the ATP-dependent amination of UTP to CTP with either L-glutamine or ammonia as the source of nitrogen. Regulates intracellular CTP levels through interactions with the four ribonucleotide triphosphates. The polypeptide is CTP synthase (Coxiella burnetii (strain CbuG_Q212) (Coxiella burnetii (strain Q212))).